The sequence spans 654 residues: Collagen alpha-1(XXV) chain (654 aa).

Positions 1 to 26 are disordered; the sequence is MLLKKHAGKGGGREPRSEDPTPAEQH. Over 1-33 the chain is Cytoplasmic; the sequence is MLLKKHAGKGGGREPRSEDPTPAEQHCARTMPP. Residues 34–54 form a helical; Signal-anchor for type II membrane protein membrane-spanning segment; the sequence is CAVLAALLSVVAVVSCLYLGV. Residues 55 to 654 lie on the Extracellular side of the membrane; the sequence is KTNDLQARIA…GLPMPGCWQK (600 aa). E113 is subject to Pyrrolidone carboxylic acid (Glu). Residues 116–168 are disordered; sequence SECNCPAGPPGKRGKRGRRGESGPPGQPGPQGPPGPKGDKGEQGDQGPRMVFP. The 44-residue stretch at 121–164 folds into the Collagen-like 1 domain; that stretch reads PAGPPGKRGKRGRRGESGPPGQPGPQGPPGPKGDKGEQGDQGPR. Positions 140–151 are enriched in pro residues; the sequence is PGQPGPQGPPGP. An interaction with amyloid-beta peptide region spans residues 181–188; sequence LIKRRLIK. Disordered stretches follow at residues 189 to 426 and 445 to 654; these read GDQG…QGAT and LTVT…CWQK. Collagen-like domains follow at residues 192 to 247, 249 to 308, 311 to 370, 372 to 425, and 447 to 505; these read GQAG…QKGS, GAPG…PGSS, GIKG…AGPP, RGER…DQGA, and VTGP…PGLP. Residues 196–208 are compositionally biased toward pro residues; sequence PPGPPGPPGPRGP. Positions 230-245 are enriched in low complexity; the sequence is PGEQGLMGPLGPPGQK. Residues 280–290 show a composition bias toward basic and acidic residues; it reads EPGEQGEKGDA. The segment covering 336 to 358 has biased composition (low complexity); it reads LPGIKGEPGFIGPQGEPGLPGLP. Composition is skewed to basic and acidic residues over residues 361 to 377 and 398 to 407; these read KGER…ERGE and SKGDRGEKGD. Positions 457–466 are enriched in low complexity; the sequence is QGLQGPKGEQ. Over residues 494–503 the composition is skewed to gly residues; sequence GEKGGIGLPG. The span at 517–527 shows a compositional bias: low complexity; that stretch reads SGMPGPQGPSI. Residues 528 to 543 are compositionally biased toward pro residues; the sequence is IGPPGPPGPHGPPGPM. In terms of domain architecture, Collagen-like 7 spans 571 to 630; the sequence is GEKGAMGEPGPRGPYGLPGKDGEPGLDGFPGPRGEKGDLGEKGEKGFRGVKGEKGEPGQP. Residues 603–626 show a composition bias toward basic and acidic residues; the sequence is RGEKGDLGEKGEKGFRGVKGEKGE.

As to quaternary structure, forms homodimers and homotrimers. Binds to the fibrillized forms of amyloid-beta protein 40 (beta-APP40) and amyloid-beta protein 42 (beta-APP42). Found associated with beta-APP42 more frequently than with beta-APP40. Post-translationally, undergoes proteolytic cleavage by furin protease to yield the soluble collagen-like Alzheimer amyloid plaque component. In terms of processing, glycosylated. Hydroxylated on 11% of proline residues and 49% of lysine residues. Expressed predominantly in brain. Deposited preferentially in primitive or neuritic amyloid plaques which are typical of Alzheimer disease.

Its subcellular location is the membrane. Functionally, inhibits fibrillization of amyloid-beta peptide during the elongation phase. Has also been shown to assemble amyloid fibrils into protease-resistant aggregates. Binds heparin. The polypeptide is Collagen alpha-1(XXV) chain (Homo sapiens (Human)).